The sequence spans 108 residues: MPVNVDRLKDAVEVLGNRVRIRVYVKPEGRERRLRLEEGELVFYTDEPPLEGRANASLINFLARGLKVSVKNIEIVHGARSRSKVVEIRDVADPDALLERLASIVDEG.

This sequence belongs to the UPF0235 family.

In Aeropyrum pernix (strain ATCC 700893 / DSM 11879 / JCM 9820 / NBRC 100138 / K1), this protein is UPF0235 protein APE_0182.1.